Reading from the N-terminus, the 366-residue chain is G-protein coupled receptor 183-B (366 aa).

At 1 to 24 (MMSPDLDLNFSSNCNLYDHRPVAR) the chain is on the extracellular side. Asn9 is a glycosylation site (N-linked (GlcNAc...) asparagine). The helical transmembrane segment at 25–50 (VLIPLVYSIICPVGLLGNALALHVVI) threads the bilayer. Residues 51–70 (SSTTKINSITLYSANLAVSD) lie on the Cytoplasmic side of the membrane. A helical membrane pass occupies residues 71-88 (ILFCLSLPLRAVYYGLGF). Topologically, residues 89–98 (HWPMGEVLCK) are extracellular. Cys97 and Cys175 are oxidised to a cystine. A helical transmembrane segment spans residues 99-120 (AIALLFYLNCYAGVNFMTCLAV). Topologically, residues 121–142 (DRFVALVFPARLAKLRKAKNVR) are cytoplasmic. Residues 143–161 (FVCLAIWLLVLAQTLPLLT) form a helical membrane-spanning segment. Topologically, residues 162–187 (IGLTKTEPDSSITCMEYPNFEGVFKG) are extracellular. The chain crosses the membrane as a helical span at residues 188-210 (LPYMLIVAVVLGFGIPVMTIIAC). Over 211 to 236 (YSILTHKLHQAAKSNQLTERSGKTKK) the chain is Cytoplasmic. A helical membrane pass occupies residues 237–260 (ARGVIAGVVFVFVVCFSPYHIDIL). The Extracellular segment spans residues 261–280 (QYMIRKLLYETDCKELQSFQ). Residues 281–305 (ISLHITVCLMNLNSCLDPFVYFFAC) form a helical membrane-spanning segment. The Cytoplasmic segment spans residues 306–366 (KGYKQKVMRM…QQICYQPSAT (61 aa)).

This sequence belongs to the G-protein coupled receptor 1 family.

The protein localises to the cell membrane. Its function is as follows. Probable receptor for oxysterols that plays a central role during humoral immunity. Promotes activated B-cell localization in the outer follicle and interfollicular regions. The chain is G-protein coupled receptor 183-B (gpr183b) from Danio rerio (Zebrafish).